The following is a 311-amino-acid chain: 1D-myo-inositol 2-acetamido-2-deoxy-alpha-D-glucopyranoside deacetylase (311 aa).

Positions 29, 32, and 162 each coordinate Zn(2+).

The protein belongs to the MshB deacetylase family. It depends on Zn(2+) as a cofactor.

It carries out the reaction 1D-myo-inositol 2-acetamido-2-deoxy-alpha-D-glucopyranoside + H2O = 1D-myo-inositol 2-amino-2-deoxy-alpha-D-glucopyranoside + acetate. Functionally, catalyzes the deacetylation of 1D-myo-inositol 2-acetamido-2-deoxy-alpha-D-glucopyranoside (GlcNAc-Ins) in the mycothiol biosynthesis pathway. The polypeptide is 1D-myo-inositol 2-acetamido-2-deoxy-alpha-D-glucopyranoside deacetylase (Corynebacterium efficiens (strain DSM 44549 / YS-314 / AJ 12310 / JCM 11189 / NBRC 100395)).